The following is a 510-amino-acid chain: NAD(P)H-quinone oxidoreductase subunit 2 A, chloroplastic (510 aa).

A run of 13 helical transmembrane segments spans residues 24 to 44 (LLLF…GLIL), 57 to 77 (IPWL…ALLF), 99 to 119 (IFQF…VEYI), 124 to 144 (MALT…MFLC), 149 to 169 (LITI…LSGY), 183 to 203 (YLLM…WLYG), 227 to 247 (PGIS…LSPA), 295 to 315 (WHLL…LIAI), 323 to 343 (MLAY…IVGD), 354 to 374 (YMLF…LFGL), 395 to 415 (ALSL…AGFF), 418 to 438 (IYLF…IGLL), and 484 to 504 (MIVC…IITI).

This sequence belongs to the complex I subunit 2 family. As to quaternary structure, NDH is composed of at least 16 different subunits, 5 of which are encoded in the nucleus.

It localises to the plastid. It is found in the chloroplast thylakoid membrane. It carries out the reaction a plastoquinone + NADH + (n+1) H(+)(in) = a plastoquinol + NAD(+) + n H(+)(out). It catalyses the reaction a plastoquinone + NADPH + (n+1) H(+)(in) = a plastoquinol + NADP(+) + n H(+)(out). NDH shuttles electrons from NAD(P)H:plastoquinone, via FMN and iron-sulfur (Fe-S) centers, to quinones in the photosynthetic chain and possibly in a chloroplast respiratory chain. The immediate electron acceptor for the enzyme in this species is believed to be plastoquinone. Couples the redox reaction to proton translocation, and thus conserves the redox energy in a proton gradient. This is NAD(P)H-quinone oxidoreductase subunit 2 A, chloroplastic from Spinacia oleracea (Spinach).